A 150-amino-acid polypeptide reads, in one-letter code: Arginine repressor (150 aa).

Belongs to the ArgR family.

The protein resides in the cytoplasm. The protein operates within amino-acid biosynthesis; L-arginine biosynthesis [regulation]. Functionally, regulates arginine biosynthesis genes. This chain is Arginine repressor, found in Clostridium beijerinckii (strain ATCC 51743 / NCIMB 8052) (Clostridium acetobutylicum).